The sequence spans 235 residues: tRNA (guanine-N(1)-)-methyltransferase (235 aa).

S-adenosyl-L-methionine is bound by residues Gly-112 and Leu-131 to Leu-136.

It belongs to the RNA methyltransferase TrmD family. Homodimer.

The protein resides in the cytoplasm. The enzyme catalyses guanosine(37) in tRNA + S-adenosyl-L-methionine = N(1)-methylguanosine(37) in tRNA + S-adenosyl-L-homocysteine + H(+). Functionally, specifically methylates guanosine-37 in various tRNAs. The sequence is that of tRNA (guanine-N(1)-)-methyltransferase from Synechococcus elongatus (strain ATCC 33912 / PCC 7942 / FACHB-805) (Anacystis nidulans R2).